A 285-amino-acid polypeptide reads, in one-letter code: Glutamate racemase (285 aa).

Substrate is bound by residues 28–29 and 60–61; these read DS and YG. Cys92 acts as the Proton donor/acceptor in catalysis. A substrate-binding site is contributed by 93–94; sequence NT. Cys204 functions as the Proton donor/acceptor in the catalytic mechanism. 205-206 provides a ligand contact to substrate; the sequence is TH.

It belongs to the aspartate/glutamate racemases family.

The catalysed reaction is L-glutamate = D-glutamate. The protein operates within cell wall biogenesis; peptidoglycan biosynthesis. Provides the (R)-glutamate required for cell wall biosynthesis. This chain is Glutamate racemase, found in Escherichia coli (strain UTI89 / UPEC).